A 456-amino-acid polypeptide reads, in one-letter code: E3 ubiquitin-protein ligase PUB24 (456 aa).

Residues 9–83 (EIPNYFICPI…QHWCVENETR (75 aa)) enclose the U-box domain.

Auto-ubiquitinated.

It catalyses the reaction S-ubiquitinyl-[E2 ubiquitin-conjugating enzyme]-L-cysteine + [acceptor protein]-L-lysine = [E2 ubiquitin-conjugating enzyme]-L-cysteine + N(6)-ubiquitinyl-[acceptor protein]-L-lysine.. It functions in the pathway protein modification; protein ubiquitination. Functionally, E3 ubiquitin-protein ligase that acts as a negative regulator of the immunity triggered by the pathogen-associated molecular patterns (PAMPs), in association with PUB22 and PUB23. The chain is E3 ubiquitin-protein ligase PUB24 (PUB24) from Arabidopsis thaliana (Mouse-ear cress).